Here is a 232-residue protein sequence, read N- to C-terminus: Sugar fermentation stimulation protein homolog (232 aa).

This sequence belongs to the SfsA family.

The polypeptide is Sugar fermentation stimulation protein homolog (Ruegeria sp. (strain TM1040) (Silicibacter sp.)).